Reading from the N-terminus, the 410-residue chain is Probable 2,3-bisphosphoglycerate-independent phosphoglycerate mutase (410 aa).

The protein belongs to the BPG-independent phosphoglycerate mutase family. A-PGAM subfamily.

It carries out the reaction (2R)-2-phosphoglycerate = (2R)-3-phosphoglycerate. It participates in carbohydrate degradation; glycolysis; pyruvate from D-glyceraldehyde 3-phosphate: step 3/5. Its function is as follows. Catalyzes the interconversion of 2-phosphoglycerate and 3-phosphoglycerate. The sequence is that of Probable 2,3-bisphosphoglycerate-independent phosphoglycerate mutase from Deinococcus radiodurans (strain ATCC 13939 / DSM 20539 / JCM 16871 / CCUG 27074 / LMG 4051 / NBRC 15346 / NCIMB 9279 / VKM B-1422 / R1).